A 323-amino-acid polypeptide reads, in one-letter code: tRNA U34 carboxymethyltransferase (323 aa).

Carboxy-S-adenosyl-L-methionine is bound by residues Lys-91, Trp-105, Lys-110, Gly-130, 152–154 (DPT), 181–182 (IE), Met-196, Tyr-200, and Arg-315.

It belongs to the class I-like SAM-binding methyltransferase superfamily. CmoB family. As to quaternary structure, homotetramer.

It carries out the reaction carboxy-S-adenosyl-L-methionine + 5-hydroxyuridine(34) in tRNA = 5-carboxymethoxyuridine(34) in tRNA + S-adenosyl-L-homocysteine + H(+). Functionally, catalyzes carboxymethyl transfer from carboxy-S-adenosyl-L-methionine (Cx-SAM) to 5-hydroxyuridine (ho5U) to form 5-carboxymethoxyuridine (cmo5U) at position 34 in tRNAs. This Escherichia coli O157:H7 protein is tRNA U34 carboxymethyltransferase.